The primary structure comprises 122 residues: Large ribosomal subunit protein uL14 (122 aa).

It belongs to the universal ribosomal protein uL14 family. In terms of assembly, part of the 50S ribosomal subunit. Forms a cluster with proteins L3 and L19. In the 70S ribosome, L14 and L19 interact and together make contacts with the 16S rRNA in bridges B5 and B8.

Binds to 23S rRNA. Forms part of two intersubunit bridges in the 70S ribosome. This chain is Large ribosomal subunit protein uL14, found in Burkholderia lata (strain ATCC 17760 / DSM 23089 / LMG 22485 / NCIMB 9086 / R18194 / 383).